The chain runs to 136 residues: Small ribosomal subunit protein uS11c (136 aa).

Residues 1 to 22 are disordered; that stretch reads MAKAIPKKGSRGRIGSRKSTRK.

This sequence belongs to the universal ribosomal protein uS11 family. Part of the 30S ribosomal subunit.

Its subcellular location is the plastid. It is found in the chloroplast. The sequence is that of Small ribosomal subunit protein uS11c from Lactuca sativa (Garden lettuce).